A 983-amino-acid polypeptide reads, in one-letter code: MSFALEETLESDWVAVRPHVFDEREKHKFVFIVAWNEIEGKFAITCHNRTAQRQRSGSREQAGTPASDGSRGPGSPAARGRSEAAASATAALRSPGPRKSQAWAEGGSPRSARSLKGDPPRGPAGRGPESPLRSPARAKASPLRRSAESRDAIASATPVPPAPPVPPVSSVRVVSASGAVSEEIEVLEMVREDEAPQPLPDSEQPPSAAELESSAEECSWAGLFSFQDLRAVHQQLCSVNSQLEPCLPVFPEEPSGMWTVLFGGAPEMTEQEIDALCYQLQVYLGHGLDTCGWKILSQVLFTETDDPEEYYESLSELRQKGYEEVLQRARRRIQELLDKHKTIESMVELLDLYQMEDEAYSSLAEATTELYQYLLQPFRDMRELAMLRRQQIKISMENDYLGPRRIESLQKEDADWQRKAHMAVLSIQDLTVKYFEITAKAQKAVYDRMRADQKKFGKASWAAAAERMEKLQYAVSKETLQMMRAKEICLEQKKHALKEEMQSLQGGTEAIARLDQLESDYYDLQLQLYEVQFEILKCEELLLTAQLESIKRLISEKRDEVVYYDTYESMEAMLEKEEMAASVHAQREELQKLQQKARQLEARRGRVSAKKAYLRNKKEICIAKHHEKFQQRFQSEDEYRAHHTIQIKRDKLHDEEERKSAWVSQERQRTLDRLRTFKQRYPGQVILKSTRLRVAHSRRKSTASPVPCEEQCHSLPTVLQGQEKTEVGGGGSQLGPSQTAEPQSLVQLEDTSSEQLESTSLPPRAVVSSELPPPQSAPLLTSIDPKPCSVTIDPLPPPLPPTPPPPPPPPPPPPPPLPVAKDNGASTTAETLEKDALRTEGNERSIPKSASAPAAHLFDSSQLVSARKKLRKTVEGLQRRRVSSPMDEVLASLKRGSFHLKKVEQRTLPPFPDEDDSNNILAQIRKGVKLKKVQKEVLRESFTLLPDTDPLTRSIHEALRRIKEASPESEDEEEALPCTDWEN.

Residues 1–119 (MSFALEETLE…RSARSLKGDP (119 aa)) form an interaction with p300/EP300 region. Residues 50 to 61 (TAQRQRSGSREQ) show a composition bias toward polar residues. A disordered region spans residues 50 to 167 (TAQRQRSGSR…PVPPAPPVPP (118 aa)). Low complexity predominate over residues 77-94 (AARGRSEAAASATAALRS). A phosphoserine mark is found at S108 and S114. Positions 158–167 (PVPPAPPVPP) are enriched in pro residues. Coiled coils occupy residues 315 to 351 (SELR…ELLD), 480 to 528 (LQMM…QLQL), and 571 to 612 (EAML…AKKA). The segment at 469–558 (EKLQYAVSKE…SIKRLISEKR (90 aa)) is interaction with p300/EP300. S704 carries the phosphoserine modification. The segment at 723 to 855 (EKTEVGGGGS…IPKSASAPAA (133 aa)) is disordered. Positions 734–761 (LGPSQTAEPQSLVQLEDTSSEQLESTSL) are enriched in polar residues. Over residues 794–818 (PLPPPLPPTPPPPPPPPPPPPPPLP) the composition is skewed to pro residues. Residues 831 to 846 (TLEKDALRTEGNERSI) show a composition bias toward basic and acidic residues. The residue at position 883 (S883) is a Phosphoserine. The region spanning 916–933 (DSNNILAQIRKGVKLKKV) is the WH2 domain. Positions 962–983 (IKEASPESEDEEEALPCTDWEN) are disordered. A compositionally biased stretch (acidic residues) spans 967 to 983 (PESEDEEEALPCTDWEN). S969 is subject to Phosphoserine.

It belongs to the JMY family. Interacts with p300/EP300, the complex activates p53/TP53 transcriptional activity. Interacts with TTC5/STRAP; the interaction takes place in the nucleus and facilitates the association between JMY and p300/EP300. Interacts with TTC5/STRAP; the interaction takes place in the cytoplasm and results in the inhibition of JYM's nucleation activity. Interacts with MAP1LC3B; the interaction results in the activation of JYM's nucleation activity in the cytoplasm. In terms of processing, ubiquitinated by MDM2, leading to its subsequent degradation by the proteasome. In case of DNA damage, the interaction with MDM2 is altered, preventing degradation and allowing interaction with p300/EP300 and its function in p53/TP53 stress response. In terms of tissue distribution, widely expressed, except in testis where it is expressed at low level.

Its subcellular location is the nucleus. The protein resides in the cytoplasmic vesicle. The protein localises to the cytoplasm. It localises to the cytoskeleton. It is found in the endomembrane system. Its subcellular location is the autophagosome membrane. Functionally, acts both as a nuclear p53/TP53-cofactor and a cytoplasmic regulator of actin dynamics depending on conditions. In nucleus, acts as a cofactor that increases p53/TP53 response via its interaction with p300/EP300. Increases p53/TP53-dependent transcription and apoptosis, suggesting an important role in p53/TP53 stress response such as DNA damage. In cytoplasm, acts as a nucleation-promoting factor for both branched and unbranched actin filaments. Activates the Arp2/3 complex to induce branched actin filament networks. Also catalyzes actin polymerization in the absence of Arp2/3, creating unbranched filaments. Contributes to cell motility by controlling actin dynamics. May promote the rapid formation of a branched actin network by first nucleating new mother filaments and then activating Arp2/3 to branch off these filaments. Upon nutrient stress, directly recruited by MAP1LC3B to the phagophore membrane surfaces to promote actin assembly during autophagy. The p53/TP53-cofactor and actin activator activities are regulated via its subcellular location. In Mus musculus (Mouse), this protein is Junction-mediating and -regulatory protein (Jmy).